The chain runs to 178 residues: 6,7-dimethyl-8-ribityllumazine synthase (178 aa).

5-amino-6-(D-ribitylamino)uracil contacts are provided by residues Y27, 58–60 (SLE), and 82–84 (CVI). 87–88 (AT) is a binding site for (2S)-2-hydroxy-3-oxobutyl phosphate. The Proton donor role is filled by H90. Residue N114 coordinates 5-amino-6-(D-ribitylamino)uracil. R128 provides a ligand contact to (2S)-2-hydroxy-3-oxobutyl phosphate.

This sequence belongs to the DMRL synthase family.

It carries out the reaction (2S)-2-hydroxy-3-oxobutyl phosphate + 5-amino-6-(D-ribitylamino)uracil = 6,7-dimethyl-8-(1-D-ribityl)lumazine + phosphate + 2 H2O + H(+). It participates in cofactor biosynthesis; riboflavin biosynthesis; riboflavin from 2-hydroxy-3-oxobutyl phosphate and 5-amino-6-(D-ribitylamino)uracil: step 1/2. In terms of biological role, catalyzes the formation of 6,7-dimethyl-8-ribityllumazine by condensation of 5-amino-6-(D-ribitylamino)uracil with 3,4-dihydroxy-2-butanone 4-phosphate. This is the penultimate step in the biosynthesis of riboflavin. In Jannaschia sp. (strain CCS1), this protein is 6,7-dimethyl-8-ribityllumazine synthase.